Reading from the N-terminus, the 102-residue chain is NADH-quinone oxidoreductase subunit K (102 aa).

Transmembrane regions (helical) follow at residues 6-26 (LEHGLAVAGILFCLGLVGLMV), 30-50 (ILFVLMSLEVMMNASALAFVV), and 62-82 (VMFILVISLAAAEASIGLAIL).

This sequence belongs to the complex I subunit 4L family. In terms of assembly, NDH-1 is composed of 13 different subunits. Subunits NuoA, H, J, K, L, M, N constitute the membrane sector of the complex.

It localises to the cell inner membrane. It carries out the reaction a quinone + NADH + 5 H(+)(in) = a quinol + NAD(+) + 4 H(+)(out). Functionally, NDH-1 shuttles electrons from NADH, via FMN and iron-sulfur (Fe-S) centers, to quinones in the respiratory chain. The immediate electron acceptor for the enzyme in this species is believed to be ubiquinone. Couples the redox reaction to proton translocation (for every two electrons transferred, four hydrogen ions are translocated across the cytoplasmic membrane), and thus conserves the redox energy in a proton gradient. The polypeptide is NADH-quinone oxidoreductase subunit K (Pseudomonas putida (strain ATCC 700007 / DSM 6899 / JCM 31910 / BCRC 17059 / LMG 24140 / F1)).